The following is an 860-amino-acid chain: Leucine--tRNA ligase (860 aa).

A 'HIGH' region motif is present at residues 42–52 (PYPSGRLHMGH). The 'KMSKS' region signature appears at 619 to 623 (KMSKS). Lys622 contributes to the ATP binding site.

This sequence belongs to the class-I aminoacyl-tRNA synthetase family.

The protein localises to the cytoplasm. The catalysed reaction is tRNA(Leu) + L-leucine + ATP = L-leucyl-tRNA(Leu) + AMP + diphosphate. The sequence is that of Leucine--tRNA ligase from Shigella sonnei (strain Ss046).